A 284-amino-acid chain; its full sequence is Bifunctional protein FolD (284 aa).

Residues 165–167 (GRS) and Ser-190 each bind NADP(+).

This sequence belongs to the tetrahydrofolate dehydrogenase/cyclohydrolase family. Homodimer.

It carries out the reaction (6R)-5,10-methylene-5,6,7,8-tetrahydrofolate + NADP(+) = (6R)-5,10-methenyltetrahydrofolate + NADPH. The catalysed reaction is (6R)-5,10-methenyltetrahydrofolate + H2O = (6R)-10-formyltetrahydrofolate + H(+). It participates in one-carbon metabolism; tetrahydrofolate interconversion. Its function is as follows. Catalyzes the oxidation of 5,10-methylenetetrahydrofolate to 5,10-methenyltetrahydrofolate and then the hydrolysis of 5,10-methenyltetrahydrofolate to 10-formyltetrahydrofolate. The protein is Bifunctional protein FolD of Streptococcus sanguinis (strain SK36).